A 295-amino-acid chain; its full sequence is Cytidine deaminase (295 aa).

CMP/dCMP-type deaminase domains lie at 48 to 168 and 187 to 295; these read TDNQ…FGPS and EDDD…YLSL. 89 to 91 is a substrate binding site; the sequence is NME. A Zn(2+)-binding site is contributed by H102. E104 acts as the Proton donor in catalysis. 2 residues coordinate Zn(2+): C129 and C132.

Belongs to the cytidine and deoxycytidylate deaminase family. As to quaternary structure, homodimer. The cofactor is Zn(2+).

It carries out the reaction cytidine + H2O + H(+) = uridine + NH4(+). The enzyme catalyses 2'-deoxycytidine + H2O + H(+) = 2'-deoxyuridine + NH4(+). This enzyme scavenges exogenous and endogenous cytidine and 2'-deoxycytidine for UMP synthesis. This chain is Cytidine deaminase, found in Vibrio vulnificus (strain CMCP6).